Reading from the N-terminus, the 24-residue chain is Superoxide dismutase [Cu-Zn] (24 aa).

The protein belongs to the Cu-Zn superoxide dismutase family. Homodimer. Cu cation is required as a cofactor. The cofactor is Zn(2+).

Its subcellular location is the cytoplasm. It catalyses the reaction 2 superoxide + 2 H(+) = H2O2 + O2. In terms of biological role, destroys radicals which are normally produced within the cells and which are toxic to biological systems. The polypeptide is Superoxide dismutase [Cu-Zn] (sod1) (Aquarana catesbeiana (American bullfrog)).